A 683-amino-acid chain; its full sequence is MAKTPPLRPHGNMAKFLAALGICSWLLVSATAHNCQHQHPKAHEVVHGVRIQLADSEDDSAGDPARHSVRRRSVAAEQPLRILLVYDESVYRLEEEKFNLINDTVLPEAVQFWEQALMVRETKGVIRLNRKCDSTQVYVKNGHTHCIDHCKATTMCGEVQVPDAHLDVCRVCNATGQNCRIDSNTQPGEGIENADFVFYVSARQTQRCFKGLTVAYAAHCQQEAALDRPIAGHANLCPESISTKPQELQTLISTVKHEILHALGFSVSLYAFFRDDDGKPRTPRKLDTGKPYLNEKLQIHQWSNETIRKVVRENWSVRGGHVNKVVDMMVTPRVIAEVRAHFNCNKLEGAELEDQGGEGTALTHWEKRILENEAMTGTHTQSPVFSRITLALMEDSGWYRANYSMATPLTWGKGLGCAFAMRSCKDWIQYNHARGRSIHPFCSKVKQDPLQTECTDDRNSVALCNLIRHEFELPKGYQNFDSLNHVKDGEEGFYGGSVSLADHCPYIQEFTWRSKNVIVRGSHCRFTENNPRPEKNFALESYGEGAKCFDHSESMWEERSCHQTREWQHWGSGCYKYDCFDGRLHILVGNYSYKCSFPGQKLSIRIAANGWLHKGAIMCPPCHELCGAQFAAQGKQCRPGEEPDPLNKYPRDNLACGAGSEKSRSVAIITAVLLLFGLRWGFS.

H257 contributes to the Zn(2+) binding site. E258 is a catalytic residue. Residues H261 and H364 each coordinate Zn(2+).

It belongs to the peptidase M8 family. It depends on Zn(2+) as a cofactor.

The protein localises to the cytoplasm. Essential for the coordination of mitotic progression, and also plays a role in cell migration. This chain is Leishmanolysin-like peptidase (Invadolysin), found in Drosophila melanogaster (Fruit fly).